The sequence spans 123 residues: UPF0102 protein CLK_1817 (123 aa).

The protein belongs to the UPF0102 family.

This Clostridium botulinum (strain Loch Maree / Type A3) protein is UPF0102 protein CLK_1817.